Reading from the N-terminus, the 509-residue chain is Maturase K (509 aa).

Belongs to the intron maturase 2 family. MatK subfamily.

It localises to the plastid. It is found in the chloroplast. Functionally, usually encoded in the trnK tRNA gene intron. Probably assists in splicing its own and other chloroplast group II introns. The sequence is that of Maturase K from Nymphaea odorata (White water lily).